We begin with the raw amino-acid sequence, 530 residues long: Histone-arginine methyltransferase CARMER (530 aa).

Positions 141–450 (ASQYFQFYGY…QSYDVTIDLH (310 aa)) constitute an SAM-dependent MTase PRMT-type domain. Residues Gln-154, Arg-163, Gly-187, Glu-209, Glu-238, and Thr-266 each coordinate S-adenosyl-L-methionine. The residue at position 501 (Arg-501) is an Asymmetric dimethylarginine; by autocatalysis.

Belongs to the class I-like SAM-binding methyltransferase superfamily. Protein arginine N-methyltransferase family. Homodimer. In terms of processing, the dimethylated protein is the major form.

It localises to the cytoplasm. The protein localises to the nucleus. The catalysed reaction is L-arginyl-[protein] + 2 S-adenosyl-L-methionine = N(omega),N(omega)-dimethyl-L-arginyl-[protein] + 2 S-adenosyl-L-homocysteine + 2 H(+). Functionally, methylates (mono- and asymmetric dimethylation) the guanidino nitrogens of arginyl residues in proteins. May methylate histone H3 at 'Arg-17' and activate transcription via chromatin remodeling. The sequence is that of Histone-arginine methyltransferase CARMER (Art4) from Drosophila erecta (Fruit fly).